Here is a 222-residue protein sequence, read N- to C-terminus: Putative hemin import ATP-binding protein HrtA (222 aa).

Residues 3 to 222 enclose the ABC transporter domain; it reads LVVKDISKTF…QLYDGKIKNS (220 aa). Residue 39–46 coordinates ATP; the sequence is GASGSGKT.

The protein belongs to the ABC transporter superfamily. HrtA family. In terms of assembly, the complex is composed of two ATP-binding proteins (HrtA), two transmembrane proteins (HrtB) and a solute-binding protein.

It localises to the cell membrane. Part of the ABC transporter complex hrt involved in hemin import. Responsible for energy coupling to the transport system. The polypeptide is Putative hemin import ATP-binding protein HrtA (hrtA) (Staphylococcus epidermidis (strain ATCC 12228 / FDA PCI 1200)).